The chain runs to 224 residues: Ribonuclease T (224 aa).

Residues 20–194 (VVIDVETAGF…YDTERTAELF (175 aa)) enclose the Exonuclease domain. Positions 23, 25, 181, and 186 each coordinate Mg(2+). Histidine 181 functions as the Proton donor/acceptor in the catalytic mechanism.

Belongs to the RNase T family. As to quaternary structure, homodimer. Requires Mg(2+) as cofactor.

Functionally, trims short 3' overhangs of a variety of RNA species, leaving a one or two nucleotide 3' overhang. Responsible for the end-turnover of tRNA: specifically removes the terminal AMP residue from uncharged tRNA (tRNA-C-C-A). Also appears to be involved in tRNA biosynthesis. This is Ribonuclease T from Enterobacter sp. (strain 638).